Here is a 411-residue protein sequence, read N- to C-terminus: 1-deoxy-D-xylulose 5-phosphate reductoisomerase (411 aa).

The NADPH site is built by Thr11, Gly12, Ser13, Ile14, and Asn124. Lys125 lines the 1-deoxy-D-xylulose 5-phosphate pocket. Glu126 serves as a coordination point for NADPH. Residue Asp150 coordinates Mn(2+). 4 residues coordinate 1-deoxy-D-xylulose 5-phosphate: Ser151, Glu152, Ser186, and His209. Glu152 is a binding site for Mn(2+). Gly215 is a binding site for NADPH. 1-deoxy-D-xylulose 5-phosphate is bound by residues Ser222, Asn227, Lys228, and Glu231. A Mn(2+)-binding site is contributed by Glu231.

It belongs to the DXR family. Mg(2+) is required as a cofactor. The cofactor is Mn(2+).

The enzyme catalyses 2-C-methyl-D-erythritol 4-phosphate + NADP(+) = 1-deoxy-D-xylulose 5-phosphate + NADPH + H(+). The protein operates within isoprenoid biosynthesis; isopentenyl diphosphate biosynthesis via DXP pathway; isopentenyl diphosphate from 1-deoxy-D-xylulose 5-phosphate: step 1/6. Its function is as follows. Catalyzes the NADPH-dependent rearrangement and reduction of 1-deoxy-D-xylulose-5-phosphate (DXP) to 2-C-methyl-D-erythritol 4-phosphate (MEP). The chain is 1-deoxy-D-xylulose 5-phosphate reductoisomerase from Psychrobacter sp. (strain PRwf-1).